The primary structure comprises 450 residues: Coiled-coil domain-containing protein 149-A (450 aa).

Coiled coils occupy residues 1-197 (MANQ…DRRK) and 259-286 (IQHQRQTNRILGNRVADLERKLKTLEIS). A disordered region spans residues 290–358 (SLPDDRTGRG…NGQVGTQLKE (69 aa)). Positions 343–354 (PSGTRTNGQVGT) are enriched in polar residues.

Belongs to the CCDC149 family.

The chain is Coiled-coil domain-containing protein 149-A (ccdc149a) from Danio rerio (Zebrafish).